A 279-amino-acid chain; its full sequence is Phosphate import ATP-binding protein PstB 2 (279 aa).

One can recognise an ABC transporter domain in the interval phenylalanine 34–valine 274. Glycine 66–serine 73 contacts ATP.

This sequence belongs to the ABC transporter superfamily. Phosphate importer (TC 3.A.1.7) family. The complex is composed of two ATP-binding proteins (PstB), two transmembrane proteins (PstC and PstA) and a solute-binding protein (PstS).

It localises to the cell inner membrane. The enzyme catalyses phosphate(out) + ATP + H2O = ADP + 2 phosphate(in) + H(+). Its function is as follows. Part of the ABC transporter complex PstSACB involved in phosphate import. Responsible for energy coupling to the transport system. The chain is Phosphate import ATP-binding protein PstB 2 from Vibrio vulnificus (strain YJ016).